The chain runs to 176 residues: dCTP deaminase (176 aa).

Residues 99–104 (RSTLAR) and D115 contribute to the dCTP site. Residue E125 is the Proton donor/acceptor of the active site. Q163 provides a ligand contact to dCTP.

Belongs to the dCTP deaminase family. Homotrimer.

The enzyme catalyses dCTP + H2O + H(+) = dUTP + NH4(+). It participates in pyrimidine metabolism; dUMP biosynthesis; dUMP from dCTP (dUTP route): step 1/2. Functionally, catalyzes the deamination of dCTP to dUTP. This chain is dCTP deaminase, found in Pyrobaculum aerophilum (strain ATCC 51768 / DSM 7523 / JCM 9630 / CIP 104966 / NBRC 100827 / IM2).